Consider the following 187-residue polypeptide: PBAN-type neuropeptides (187 aa).

A signal peptide spans 1-22 (MSRFYFFFNLICLYLAIKSALS). Positions 23-64 (AELDTNDQKYADLRTTGRGESPDSTGPDSDTLRRDDGAEGLN) are excised as a propeptide. The segment covering 34–43 (DLRTTGRGES) has biased composition (basic and acidic residues). Residues 34–58 (DLRTTGRGESPDSTGPDSDTLRRDD) are disordered. At Leu-76 the chain carries Leucine amide. The propeptide occupies 80–127 (TIAADLHDDLVEEFDAEPLGYAGEPPQKLATELVQGAPYMVLLVTAKP). Residues 132–163 (PIFYHTTSPRLGRRDSVGENHQRPPFAPRLGR) form a disordered region. At Leu-142 the chain carries Leucine amide. The segment covering 143–153 (GRRDSVGENHQ) has biased composition (basic and acidic residues). Leu-161 and Leu-171 each carry leucine amide. The propeptide occupies 174-187 (SYNGGYPLPFQFAY).

Belongs to the pyrokinin family.

The protein localises to the secreted. Its function is as follows. A hormone that controls sex pheromone production in females and pheromone responsiveness in male. Also mediates visceral muscle contractile activity (myotropic activity). In Anopheles gambiae (African malaria mosquito), this protein is PBAN-type neuropeptides.